A 447-amino-acid polypeptide reads, in one-letter code: Glucose-6-phosphate isomerase (447 aa).

Glu-287 (proton donor) is an active-site residue. Active-site residues include His-308 and Lys-422.

Belongs to the GPI family.

It localises to the cytoplasm. It catalyses the reaction alpha-D-glucose 6-phosphate = beta-D-fructose 6-phosphate. It participates in carbohydrate biosynthesis; gluconeogenesis. It functions in the pathway carbohydrate degradation; glycolysis; D-glyceraldehyde 3-phosphate and glycerone phosphate from D-glucose: step 2/4. Functionally, catalyzes the reversible isomerization of glucose-6-phosphate to fructose-6-phosphate. This Heliobacterium modesticaldum (strain ATCC 51547 / Ice1) protein is Glucose-6-phosphate isomerase.